A 156-amino-acid polypeptide reads, in one-letter code: Endoribonuclease YbeY (156 aa).

Histidine 117, histidine 121, and histidine 127 together coordinate Zn(2+).

The protein belongs to the endoribonuclease YbeY family. The cofactor is Zn(2+).

Its subcellular location is the cytoplasm. Single strand-specific metallo-endoribonuclease involved in late-stage 70S ribosome quality control and in maturation of the 3' terminus of the 16S rRNA. This is Endoribonuclease YbeY from Shewanella halifaxensis (strain HAW-EB4).